Reading from the N-terminus, the 164-residue chain is Putative 4-hydroxy-4-methyl-2-oxoglutarate aldolase (164 aa).

Residues 80-83 (GGNL) and Arg-102 each bind substrate. A divalent metal cation is bound at residue Asp-103.

This sequence belongs to the class II aldolase/RraA-like family. Homotrimer. It depends on a divalent metal cation as a cofactor.

The catalysed reaction is 4-hydroxy-4-methyl-2-oxoglutarate = 2 pyruvate. It catalyses the reaction oxaloacetate + H(+) = pyruvate + CO2. In terms of biological role, catalyzes the aldol cleavage of 4-hydroxy-4-methyl-2-oxoglutarate (HMG) into 2 molecules of pyruvate. Also contains a secondary oxaloacetate (OAA) decarboxylase activity due to the common pyruvate enolate transition state formed following C-C bond cleavage in the retro-aldol and decarboxylation reactions. The protein is Putative 4-hydroxy-4-methyl-2-oxoglutarate aldolase of Paraburkholderia phymatum (strain DSM 17167 / CIP 108236 / LMG 21445 / STM815) (Burkholderia phymatum).